The primary structure comprises 213 residues: Adenylate kinase (213 aa).

Position 10–15 (10–15 (GAGKGT)) interacts with ATP. The interval 30-59 (STGDMFRAAMANQTEMGLLAKSYIDKGDLV) is NMP. AMP is bound by residues Thr31, Arg36, 57-59 (DLV), 86-89 (GYPR), and Gln93. Positions 127–160 (GRIIHKKTGETFHKIFNPPAGDYDENDYYQREDD) are LID. ATP-binding positions include Arg128 and 137 to 138 (TF). Positions 157 and 168 each coordinate AMP. Gln196 contributes to the ATP binding site.

This sequence belongs to the adenylate kinase family. In terms of assembly, monomer.

It is found in the cytoplasm. The enzyme catalyses AMP + ATP = 2 ADP. The protein operates within purine metabolism; AMP biosynthesis via salvage pathway; AMP from ADP: step 1/1. In terms of biological role, catalyzes the reversible transfer of the terminal phosphate group between ATP and AMP. Plays an important role in cellular energy homeostasis and in adenine nucleotide metabolism. The protein is Adenylate kinase of Streptococcus uberis (strain ATCC BAA-854 / 0140J).